A 263-amino-acid chain; its full sequence is Acetylglutamate kinase (263 aa).

Substrate is bound by residues 48-49 (GG), Arg70, and Asn162.

The protein belongs to the acetylglutamate kinase family. ArgB subfamily.

It is found in the cytoplasm. It carries out the reaction N-acetyl-L-glutamate + ATP = N-acetyl-L-glutamyl 5-phosphate + ADP. Its pathway is amino-acid biosynthesis; L-arginine biosynthesis; N(2)-acetyl-L-ornithine from L-glutamate: step 2/4. Catalyzes the ATP-dependent phosphorylation of N-acetyl-L-glutamate. The chain is Acetylglutamate kinase from Vibrio vulnificus (strain YJ016).